We begin with the raw amino-acid sequence, 109 residues long: RNA-binding protein Hfq (109 aa).

A Sm domain is found at 9 to 68 (DPFLNALRKEKVSVSVYLVNGIKLQGQVEAFDQFCIVLRNTVNQMVYKHAISTIVPAKSV). Residues 77–109 (PYHQNSNDEQDENVDDIHSDDLEIQENEGNIHE) form a disordered region.

The protein belongs to the Hfq family. In terms of assembly, homohexamer.

RNA chaperone that binds small regulatory RNA (sRNAs) and mRNAs to facilitate mRNA translational regulation in response to envelope stress, environmental stress and changes in metabolite concentrations. Also binds with high specificity to tRNAs. The protein is RNA-binding protein Hfq of Francisella tularensis subsp. tularensis (strain FSC 198).